The sequence spans 274 residues: Energy-coupling factor transporter ATP-binding protein EcfA1 (274 aa).

One can recognise an ABC transporter domain in the interval 11-245 (IELKNVKFKY…ERVIEIAKID (235 aa)). ATP is bound at residue 45-52 (GHNGSGKS).

This sequence belongs to the ABC transporter superfamily. Energy-coupling factor EcfA family. As to quaternary structure, forms a stable energy-coupling factor (ECF) transporter complex composed of 2 membrane-embedded substrate-binding proteins (S component), 2 ATP-binding proteins (A component) and 2 transmembrane proteins (T component).

Its subcellular location is the cell membrane. In terms of biological role, ATP-binding (A) component of a common energy-coupling factor (ECF) ABC-transporter complex. Unlike classic ABC transporters this ECF transporter provides the energy necessary to transport a number of different substrates. This Mycoplasma mobile (strain ATCC 43663 / 163K / NCTC 11711) (Mesomycoplasma mobile) protein is Energy-coupling factor transporter ATP-binding protein EcfA1.